The chain runs to 393 residues: uncharacterized protein (393 aa).

Residues 1–17 (MVSKDQTSFNKRWTLGL) lie on the Cytoplasmic side of the membrane. A helical transmembrane segment spans residues 18 to 38 (LMLGLVIILWVLSSFLINLIF). At 39-46 (EDDSYRKP) the chain is on the vacuolar side. The chain crosses the membrane as a helical span at residues 47 to 67 (FFITYTNTAAFIFYLFPTAKA). Residues 68 to 132 (VVVNYKDTGR…LYETIKLSAE (65 aa)) lie on the Cytoplasmic side of the membrane. Phosphoserine is present on S93. A helical transmembrane segment spans residues 133–153 (FCILWFTANLVTNASLAFTSV). Topologically, residues 154-156 (ASQ) are vacuolar. The helical transmembrane segment at 157 to 176 (TILSTTSSFFTLFIGAICHV) threads the bilayer. At 177 to 182 (ESLSKS) the chain is on the cytoplasmic side. The chain crosses the membrane as a helical span at residues 183–200 (KVLGSFISFVGIIMVTKS). Residues 201-219 (DSHQRYQRHIADVSGDDND) are Vacuolar-facing. The chain crosses the membrane as a helical span at residues 220–240 (AVQVLIGNLLALAGAVLYGVY). Residues 241–257 (STLLKREVGDETRVNMK) are Cytoplasmic-facing. A helical transmembrane segment spans residues 258-278 (IFFGFVGLFNLLFLWPSLIVL). The Vacuolar portion of the chain corresponds to 279-292 (DFFGWEPFSLPKDP). The chain crosses the membrane as a helical span at residues 293-313 (KVVVIIFVNCLITFVSDFCWA). At 314–321 (KAMLLTSP) the chain is on the cytoplasmic side. A helical transmembrane segment spans residues 322–342 (LTVTVGLSITIPLAMFGDVIF). Over 343 to 345 (KHK) the chain is Vacuolar. A helical transmembrane segment spans residues 346–366 (TMSALYLFGATLILGSFFIIN). Over 367 to 393 (KSSEEEHFENSITASNYESVEVPAANN) the chain is Cytoplasmic.

The protein belongs to the TPT transporter family.

It localises to the vacuole membrane. This is an uncharacterized protein from Saccharomyces cerevisiae (strain ATCC 204508 / S288c) (Baker's yeast).